We begin with the raw amino-acid sequence, 495 residues long: Aspartyl/glutamyl-tRNA(Asn/Gln) amidotransferase subunit B (495 aa).

This sequence belongs to the GatB/GatE family. GatB subfamily. As to quaternary structure, heterotrimer of A, B and C subunits.

It catalyses the reaction L-glutamyl-tRNA(Gln) + L-glutamine + ATP + H2O = L-glutaminyl-tRNA(Gln) + L-glutamate + ADP + phosphate + H(+). It carries out the reaction L-aspartyl-tRNA(Asn) + L-glutamine + ATP + H2O = L-asparaginyl-tRNA(Asn) + L-glutamate + ADP + phosphate + 2 H(+). Its function is as follows. Allows the formation of correctly charged Asn-tRNA(Asn) or Gln-tRNA(Gln) through the transamidation of misacylated Asp-tRNA(Asn) or Glu-tRNA(Gln) in organisms which lack either or both of asparaginyl-tRNA or glutaminyl-tRNA synthetases. The reaction takes place in the presence of glutamine and ATP through an activated phospho-Asp-tRNA(Asn) or phospho-Glu-tRNA(Gln). The chain is Aspartyl/glutamyl-tRNA(Asn/Gln) amidotransferase subunit B from Halobacterium salinarum (strain ATCC 700922 / JCM 11081 / NRC-1) (Halobacterium halobium).